The following is a 314-amino-acid chain: Homoserine O-succinyltransferase (314 aa).

Cys142 functions as the Acyl-thioester intermediate in the catalytic mechanism. Lys163 and Ser192 together coordinate substrate. Catalysis depends on His235, which acts as the Proton acceptor. Glu237 is an active-site residue. Arg249 is a binding site for substrate.

This sequence belongs to the MetA family.

It localises to the cytoplasm. It catalyses the reaction L-homoserine + succinyl-CoA = O-succinyl-L-homoserine + CoA. Its pathway is amino-acid biosynthesis; L-methionine biosynthesis via de novo pathway; O-succinyl-L-homoserine from L-homoserine: step 1/1. Transfers a succinyl group from succinyl-CoA to L-homoserine, forming succinyl-L-homoserine. This chain is Homoserine O-succinyltransferase, found in Shewanella frigidimarina (strain NCIMB 400).